The chain runs to 322 residues: Interferon regulatory factor 1 (322 aa).

The segment at residues 5 to 113 is a DNA-binding region (IRF tryptophan pentad repeat); sequence RMRMRPWLEM…SAVRVYRMLP (109 aa). Position 78 is an N6-acetyllysine (Lys78). The segment at 92 to 164 is disordered; that stretch reads EEVKDQSRNK…STLPDDHSSY (73 aa). Over residues 141–157 the composition is skewed to polar residues; that stretch reads GESSPDTFSDGLSSSTL. Residues Lys276 and Lys296 each participate in a glycyl lysine isopeptide (Lys-Gly) (interchain with G-Cter in SUMO) cross-link.

Belongs to the IRF family. In terms of assembly, monomer. Homodimer. Interacts with EP300. Interacts with MYD88. Interacts with PIAS3. Interacts with SPOP. Phosphorylated by CK2 and this positively regulates its activity. Post-translationally, sumoylation represses the transcriptional activity and displays enhanced resistance to protein degradation. Sumoylated by UBE2I/UBC9 and SUMO1. Inactivates the tumor suppressor activity. Elevated levels in tumor cells. Major site is Lys-276. Sumoylation is enhanced by PIAS3. Desumoylated by SENP1 in tumor cells and appears to compete with ubiquitination on C-terminal sites. In terms of processing, ubiquitinated in a SPOP-depedent manner. Appears to compete with sumoylation on C-terminal sites.

It is found in the nucleus. The protein localises to the cytoplasm. Activated by MYD88. Functionally, transcriptional regulator which displays a remarkable functional diversity in the regulation of cellular responses. Regulates transcription of IFN and IFN-inducible genes, host response to viral and bacterial infections, regulation of many genes expressed during hematopoiesis, inflammation, immune responses and cell proliferation and differentiation, regulation of the cell cycle and induction of growth arrest and programmed cell death following DNA damage. Stimulates both innate and acquired immune responses through the activation of specific target genes and can act as a transcriptional activator and repressor regulating target genes by binding to an interferon-stimulated response element (ISRE) in their promoters. Has an essentail role in IFNG-dependent immunity to mycobacteria. Binds to a consensus sequence in gene promoters. Its target genes for transcriptional activation activity include: genes involved in anti-viral response, such as IFN-alpha/beta, RIGI, TNFSF10/TRAIL, ZBP1, OAS1/2, PIAS1/GBP, EIF2AK2/PKR and RSAD2/viperin; antibacterial response, such as GBP2, GBP5 and NOS2/INOS; anti-proliferative response, such as p53/TP53, LOX and CDKN1A; apoptosis, such as BBC3/PUMA, CASP1, CASP7 and CASP8; immune response, such as IL7, IL12A/B and IL15, PTGS2/COX2 and CYBB; DNA damage responses and DNA repair, such as POLQ/POLH; MHC class I expression, such as TAP1, PSMB9/LMP2, PSME1/PA28A, PSME2/PA28B and B2M and MHC class II expression, such as CIITA; metabolic enzymes, such as ACOD1/IRG1. Represses genes involved in anti-proliferative response, such as BIRC5/survivin, CCNB1, CCNE1, CDK1, CDK2 and CDK4 and in immune response, such as FOXP3, IL4, ANXA2 and TLR4. Stimulates p53/TP53-dependent transcription through enhanced recruitment of EP300 leading to increased acetylation of p53/TP53. Plays an important role in immune response directly affecting NK maturation and activity, macrophage production of IL12, Th1 development and maturation of CD8+ T-cells. Also implicated in the differentiation and maturation of dendritic cells and in the suppression of regulatory T (Treg) cells development. Acts as a tumor suppressor and plays a role not only in antagonism of tumor cell growth but also in stimulating an immune response against tumor cells. The chain is Interferon regulatory factor 1 (IRF1) from Sus scrofa (Pig).